The sequence spans 80 residues: MMAGRRSWPAMATVLLALLVCLGELVDSKPQPSDEKASPDKHHRFSLSRYAKLANRLANPKLLETFLSKWIGDRGNRSVK.

A signal peptide spans 1-32; that stretch reads MMAGRRSWPAMATVLLALLVCLGELVDSKPQP.

Functionally, inhibits calcium transport into spermatozoa; it does not bind directly to calcium. Binds to calmodulin. Inhibits the growth of microorganisms. Seem to act as an antibiotic by permeabilizing the bacterial membrane. In Bos taurus (Bovine), this protein is Caltrin (PYY2).